A 322-amino-acid polypeptide reads, in one-letter code: tRNA-dihydrouridine synthase B (322 aa).

FMN is bound by residues 16-18 (PMA) and Gln-70. The active-site Proton donor is Cys-100. FMN is bound by residues Lys-139, 200–202 (NGD), and 224–225 (GR).

Belongs to the Dus family. DusB subfamily. It depends on FMN as a cofactor.

The catalysed reaction is a 5,6-dihydrouridine in tRNA + NAD(+) = a uridine in tRNA + NADH + H(+). It catalyses the reaction a 5,6-dihydrouridine in tRNA + NADP(+) = a uridine in tRNA + NADPH + H(+). Functionally, catalyzes the synthesis of 5,6-dihydrouridine (D), a modified base found in the D-loop of most tRNAs, via the reduction of the C5-C6 double bond in target uridines. This is tRNA-dihydrouridine synthase B from Vibrio cholerae serotype O1 (strain ATCC 39315 / El Tor Inaba N16961).